The following is a 350-amino-acid chain: Guanine nucleotide-binding protein G(t) subunit alpha-1 (350 aa).

Residues 1 to 21 are disordered; sequence MGAGASAEEKHSRELEKKLKE. Residue glycine 2 is the site of N-myristoyl glycine attachment. A compositionally biased stretch (basic and acidic residues) spans 7 to 21; the sequence is AEEKHSRELEKKLKE. The G-alpha domain maps to 28-350; the sequence is RTVKLLLLGA…KENLKDCGLF (323 aa). Residues 31–44 are G1 motif; the sequence is KLLLLGAGESGKST. 36 to 43 contacts GTP; that stretch reads GAGESGKS. Serine 43 provides a ligand contact to Mg(2+). Tyrosine 142 carries the post-translational modification Phosphotyrosine; by SRC. Residues aspartate 146, 171–177, glycine 199, 265–268, and alanine 322 contribute to the GTP site; these read LRSRVKT and NKKD. The G2 motif stretch occupies residues 169–177; sequence DVLRSRVKT. At arginine 174 the chain carries ADP-ribosylarginine; by cholera toxin. Threonine 177 contributes to the Mg(2+) binding site. Residues 192–201 form a G3 motif region; it reads FRMFDVGGQR. The segment at 261–268 is G4 motif; that stretch reads VLFLNKKD. The G5 motif stretch occupies residues 320 to 325; it reads TCATDT. Residues 340 to 350 are interaction with RHO; that stretch reads IKENLKDCGLF. Position 347 is an ADP-ribosylcysteine; by pertussis toxin (cysteine 347).

This sequence belongs to the G-alpha family. G(i/o/t/z) subfamily. As to quaternary structure, heterotrimeric G proteins are composed of 3 subunits alpha, beta and gamma. The alpha chain contains the guanine nucleotide binding site. Interacts with RHO. Interacts with RGS9 and PDE6G. Interacts (when myristoylated) with UNC119; interaction is required for localization in sensory neurons. Rod photoreceptor cells. Predominantly expressed in the retina followed by the ciliary body, iris and retinal pigment epithelium.

Its subcellular location is the cell projection. It is found in the cilium. The protein resides in the photoreceptor outer segment. The protein localises to the membrane. It localises to the photoreceptor inner segment. Functionally, functions as a signal transducer for the rod photoreceptor RHO. Required for normal RHO-mediated light perception by the retina. Guanine nucleotide-binding proteins (G proteins) function as transducers downstream of G protein-coupled receptors (GPCRs), such as the photoreceptor RHO. The alpha chain contains the guanine nucleotide binding site and alternates between an active, GTP-bound state and an inactive, GDP-bound state. Activated RHO promotes GDP release and GTP binding. Signaling is mediated via downstream effector proteins, such as cGMP-phosphodiesterase. This is Guanine nucleotide-binding protein G(t) subunit alpha-1 (GNAT1) from Homo sapiens (Human).